The sequence spans 347 residues: tRNA N6-adenosine threonylcarbamoyltransferase (347 aa).

Positions 113 and 117 each coordinate Fe cation. Residues 136–140 (LVSGG), Asp-170, Gly-183, Asp-187, and Asn-282 each bind substrate. A Fe cation-binding site is contributed by Asp-310.

It belongs to the KAE1 / TsaD family. Fe(2+) serves as cofactor.

The protein localises to the cytoplasm. The enzyme catalyses L-threonylcarbamoyladenylate + adenosine(37) in tRNA = N(6)-L-threonylcarbamoyladenosine(37) in tRNA + AMP + H(+). Functionally, required for the formation of a threonylcarbamoyl group on adenosine at position 37 (t(6)A37) in tRNAs that read codons beginning with adenine. Is involved in the transfer of the threonylcarbamoyl moiety of threonylcarbamoyl-AMP (TC-AMP) to the N6 group of A37, together with TsaE and TsaB. TsaD likely plays a direct catalytic role in this reaction. This chain is tRNA N6-adenosine threonylcarbamoyltransferase, found in Cutibacterium acnes (strain DSM 16379 / KPA171202) (Propionibacterium acnes).